We begin with the raw amino-acid sequence, 164 residues long: UPF0304 protein ECA3037 (164 aa).

Belongs to the UPF0304 family.

This Pectobacterium atrosepticum (strain SCRI 1043 / ATCC BAA-672) (Erwinia carotovora subsp. atroseptica) protein is UPF0304 protein ECA3037.